Consider the following 85-residue polypeptide: Putative membrane protein insertion efficiency factor (85 aa).

Residues 62–85 are disordered; sequence KGGFDPVPLKKDKSASKHSHKHNH.

The protein belongs to the UPF0161 family.

Its subcellular location is the cell membrane. In terms of biological role, could be involved in insertion of integral membrane proteins into the membrane. In Staphylococcus aureus (strain Mu3 / ATCC 700698), this protein is Putative membrane protein insertion efficiency factor.